We begin with the raw amino-acid sequence, 240 residues long: Putative exosome complex component RRP41 (240 aa).

This sequence belongs to the RNase PH family. As to quaternary structure, component of the RNA exosome complex.

It is found in the cytoplasm. The protein localises to the nucleus. The protein resides in the nucleolus. Its subcellular location is the nucleoplasm. Its function is as follows. Non-catalytic component of the RNA exosome complex which has 3'-&gt;5' exoribonuclease activity and participates in a multitude of cellular RNA processing and degradation events. The sequence is that of Putative exosome complex component RRP41 (exos-4.1) from Caenorhabditis elegans.